A 109-amino-acid polypeptide reads, in one-letter code: ATP-dependent Clp protease adapter protein ClpS (109 aa).

The tract at residues 1–21 (MAERKQGGQNNGAGSSVITEV) is disordered.

This sequence belongs to the ClpS family. Binds to the N-terminal domain of the chaperone ClpA.

Its function is as follows. Involved in the modulation of the specificity of the ClpAP-mediated ATP-dependent protein degradation. This Caulobacter sp. (strain K31) protein is ATP-dependent Clp protease adapter protein ClpS.